The chain runs to 1544 residues: Lysophospholipase NTE1 (1544 aa).

Residues 1-37 are Cytoplasmic-facing; sequence MSTIEIVSTVAEYTEIHSPVSSKFLLPSARDSSSSIS. A helical membrane pass occupies residues 38–58; the sequence is LFSAIFWFWSWLFFKIMNIFL. The Lumenal portion of the chain corresponds to 59–76; that stretch reads YYIPNIIVNLFSVNFQIT. The helical transmembrane segment at 77 to 97 threads the bilayer; that stretch reads LSLSSIVITLTGIISFCFLIV. Residues 98–1544 are Cytoplasmic-facing; sequence RYKYLTRYSK…RKSLYRRSSI (1447 aa). 2 disordered regions span residues 265-312 and 424-552; these read RLFS…RNYP and ESPS…EETE. The span at 275–310 shows a compositional bias: polar residues; it reads NPASNPLSPDNTGSKSFDPLSSGNFNDTSLSSSDRN. The segment covering 425-447 has biased composition (low complexity); it reads SPSVSINKTSSSSSSLPKKSTTS. 2 stretches are compositionally biased toward polar residues: residues 448–458 and 517–536; these read LRPLNRNQSSR and QISS…TTKF. Residues 537 to 546 show a composition bias toward basic and acidic residues; the sequence is ENIRDRTFSD. A nucleoside 3',5'-cyclic phosphate is bound by residues 681 to 811 and 807 to 960; these read SFES…LKSL and KLKS…VANK. One can recognise a PNPLA domain in the interval 1237-1401; the sequence is LVLGGGGSRG…LDNLPVMEMK (165 aa). Residues 1241-1246 carry the GXGXXG motif; that stretch reads GGGSRG. A GXSXG motif is present at residues 1268 to 1272; sequence GTSIG. The Nucleophile role is filled by serine 1270. Aspartate 1388 functions as the Proton acceptor in the catalytic mechanism. A DGA/G motif is present at residues 1388 to 1390; that stretch reads DGG.

This sequence belongs to the NTE family.

It is found in the endoplasmic reticulum membrane. It catalyses the reaction a 1-acyl-sn-glycero-3-phosphocholine + H2O = sn-glycerol 3-phosphocholine + a fatty acid + H(+). Its activity is regulated as follows. Inhibited by organophosphorus esters. Functionally, intracellular phospholipase B that catalyzes the double deacylation of phosphatidylcholine (PC) to glycerophosphocholine (GroPCho). Plays an important role in membrane lipid homeostasis. Responsible for the rapid PC turnover in response to inositol, elevated temperatures, or when choline is present in the growth medium. This Debaryomyces hansenii (strain ATCC 36239 / CBS 767 / BCRC 21394 / JCM 1990 / NBRC 0083 / IGC 2968) (Yeast) protein is Lysophospholipase NTE1 (NTE1).